A 291-amino-acid polypeptide reads, in one-letter code: Prepilin leader peptidase/N-methyltransferase (291 aa).

A helical membrane pass occupies residues 14–34 (LYFSLVFLFSLMIGSFLNVVI). Zn(2+) contacts are provided by Cys-75, Cys-78, Cys-100, and Cys-103. 6 helical membrane-spanning segments follow: residues 107 to 127 (ISARYPLVELLTALLSVVVAM), 131 to 151 (PGWGTLAALLLTWVLVALTFI), 162 to 182 (LTLPLLWGGLLFNLLGGYVPL), 186 to 206 (VIGAMAGYLVLWSLYWAFKLL), 232 to 252 (LPIVLLLSSLVGAIFGIGLIL), and 262 to 282 (IPFGPYLAIAGWIALLWGDSI).

Belongs to the peptidase A24 family. Zn(2+) serves as cofactor.

It is found in the cell inner membrane. The catalysed reaction is Typically cleaves a -Gly-|-Phe- bond to release an N-terminal, basic peptide of 5-8 residues from type IV prepilin, and then N-methylates the new N-terminal amino group, the methyl donor being S-adenosyl-L-methionine.. In terms of biological role, plays an essential role in type IV pili and type II pseudopili formation by proteolytically removing the leader sequence from substrate proteins and subsequently monomethylating the alpha-amino group of the newly exposed N-terminal phenylalanine. This Aeromonas salmonicida (strain A449) protein is Prepilin leader peptidase/N-methyltransferase (tapD).